The sequence spans 187 residues: Macro domain-containing protein MM_0177 (187 aa).

Residues 8 to 187 enclose the Macro domain; the sequence is VEEGIRMELN…SIKKALSKIL (180 aa).

This sequence belongs to the MacroD-type family.

The sequence is that of Macro domain-containing protein MM_0177 from Methanosarcina mazei (strain ATCC BAA-159 / DSM 3647 / Goe1 / Go1 / JCM 11833 / OCM 88) (Methanosarcina frisia).